A 350-amino-acid chain; its full sequence is tRNA uridine(34) hydroxylase (350 aa).

Positions 146 to 240 constitute a Rhodanese domain; the sequence is DDPDALFIDM…YARKAREQGL (95 aa). The Cysteine persulfide intermediate role is filled by C200.

It belongs to the TrhO family.

It carries out the reaction uridine(34) in tRNA + AH2 + O2 = 5-hydroxyuridine(34) in tRNA + A + H2O. Functionally, catalyzes oxygen-dependent 5-hydroxyuridine (ho5U) modification at position 34 in tRNAs. This chain is tRNA uridine(34) hydroxylase, found in Escherichia fergusonii (strain ATCC 35469 / DSM 13698 / CCUG 18766 / IAM 14443 / JCM 21226 / LMG 7866 / NBRC 102419 / NCTC 12128 / CDC 0568-73).